The primary structure comprises 1486 residues: Chromosome partition protein MukB (1486 aa).

Residue 34-41 (GGNGAGKS) participates in ATP binding. Coiled coils occupy residues 326–418 (LEAD…QYNQ), 444–480 (LETF…QAYQ), and 509–603 (RHLA…RAPV). Residues 666–783 (PGGSEDQRLN…EVPLFGRAAR (118 aa)) are flexible hinge. 3 coiled-coil regions span residues 835 to 923 (EAEI…AKLE), 977 to 1115 (EMLS…TAKA), and 1209 to 1266 (VEAI…QNVS).

It belongs to the SMC family. MukB subfamily. Homodimerization via its hinge domain. Binds to DNA via its C-terminal region. Interacts, and probably forms a ternary complex, with MukE and MukF via its C-terminal region. The complex formation is stimulated by calcium or magnesium. Interacts with tubulin-related protein FtsZ.

The protein localises to the cytoplasm. The protein resides in the nucleoid. Plays a central role in chromosome condensation, segregation and cell cycle progression. Functions as a homodimer, which is essential for chromosome partition. Involved in negative DNA supercoiling in vivo, and by this means organize and compact chromosomes. May achieve or facilitate chromosome segregation by condensation DNA from both sides of a centrally located replisome during cell division. In Escherichia coli O81 (strain ED1a), this protein is Chromosome partition protein MukB.